We begin with the raw amino-acid sequence, 260 residues long: FAS1 domain-containing protein SELMODRAFT_448915 (260 aa).

The Cytoplasmic portion of the chain corresponds to 1–35 (MRRTGRSYKPLLSQLKDHHIPVHPSSRAERAMESR). Residues 36 to 58 (TLLVLLFVGVVTIVSSGLERAAA) traverse the membrane as a helical segment. The 140-residue stretch at 59–198 (QDDTDDGILP…IACHGIDRVL (140 aa)) folds into the FAS1 domain. The Extracellular segment spans residues 59–260 (QDDTDDGILP…SSASRYPVSE (202 aa)). Residues N118, N169, N176, N201, N236, and N247 are each glycosylated (N-linked (GlcNAc...) asparagine). Residues 210–260 (PEASPPFGAEQASPAPEALPPGTRSPNNTANPSNRKSNSTRSSASRYPVSE) are disordered. Residues 233 to 254 (RSPNNTANPSNRKSNSTRSSAS) are compositionally biased toward polar residues.

The protein localises to the membrane. This Selaginella moellendorffii (Spikemoss) protein is FAS1 domain-containing protein SELMODRAFT_448915.